We begin with the raw amino-acid sequence, 351 residues long: Protein pelota homolog (351 aa).

The protein belongs to the eukaryotic release factor 1 family. Pelota subfamily. As to quaternary structure, monomer. Requires a divalent metal cation as cofactor.

The protein localises to the cytoplasm. Functionally, may function in recognizing stalled ribosomes, interact with stem-loop structures in stalled mRNA molecules, and effect endonucleolytic cleavage of the mRNA. May play a role in the release non-functional ribosomes and degradation of damaged mRNAs. Has endoribonuclease activity. This chain is Protein pelota homolog, found in Methanosphaera stadtmanae (strain ATCC 43021 / DSM 3091 / JCM 11832 / MCB-3).